The following is a 92-amino-acid chain: UPF0250 protein XOO3732 (92 aa).

This sequence belongs to the UPF0250 family.

The chain is UPF0250 protein XOO3732 from Xanthomonas oryzae pv. oryzae (strain MAFF 311018).